A 349-amino-acid polypeptide reads, in one-letter code: MAFKIASSPHVTRNLHTSTVMQRVILCLLPGLVVQCAFFGWGTLVQVLLAIIVALSAEAVVMKLRQRSIKASLSDNSAMLTAILIGVAIPPLAPWWMIVIGTAFAIIIVKHLYGGLGHNLFNPAMAAYVLLLISFPVQMTTWIAPSTVAMHSPSVLDSLQLIFNIGANVNMDQFRLGIDGVAMATPLDTLKTDLSMGLTRTESMTKAIFDGATGVGWFWVNLAYLAGGLVLLKLKAIRWHISTGVLAGLFIASSVGFLLSPDTQGSPLFHLFSGATMLAAFFIATDPVTAATSPRGRIIFGTLIGILVYIIRTQGGYPDAFAFAVLLANLCAPFIDYYVRPRSYGHSAG.

The next 3 helical transmembrane spans lie at 37–57 (AFFG…ALSA), 73–90 (LSDN…VAIP), and 124–144 (AMAA…TWIA). Thr-185 bears the FMN phosphoryl threonine mark. Transmembrane regions (helical) follow at residues 212 to 232 (ATGV…LVLL), 239 to 259 (WHIS…GFLL), 265 to 285 (GSPL…FIAT), 291 to 311 (ATSP…VYII), and 315 to 335 (GGYP…APFI).

This sequence belongs to the NqrB/RnfD family. As to quaternary structure, the complex is composed of six subunits: RnfA, RnfB, RnfC, RnfD, RnfE and RnfG. FMN serves as cofactor.

The protein localises to the cell inner membrane. In terms of biological role, part of a membrane-bound complex that couples electron transfer with translocation of ions across the membrane. The protein is Ion-translocating oxidoreductase complex subunit D of Shewanella sp. (strain W3-18-1).